A 476-amino-acid chain; its full sequence is Phosphomethylpyrimidine synthase (476 aa).

Residues 1–27 form a disordered region; the sequence is MSTQLQHARDGTVTDAMRRVADREGRD. Positions 7 to 27 are enriched in basic and acidic residues; the sequence is HARDGTVTDAMRRVADREGRD. Substrate is bound by residues Asn-67, Met-96, Tyr-125, His-160, 180–182, 221–224, and Glu-260; these read SRG and DGLR. Residue His-264 coordinates Zn(2+). Residue Tyr-287 participates in substrate binding. Zn(2+) is bound at residue His-328. [4Fe-4S] cluster contacts are provided by Cys-408, Cys-411, and Cys-416. The disordered stretch occupies residues 425–476; it reads RDAGDDADDMTELTTETDLSESAAAEVNRPPTGTHDAPAAEQAPSPGDDDDD. Low complexity predominate over residues 436–447; that stretch reads ELTTETDLSESA.

Belongs to the ThiC family. Requires [4Fe-4S] cluster as cofactor.

It catalyses the reaction 5-amino-1-(5-phospho-beta-D-ribosyl)imidazole + S-adenosyl-L-methionine = 4-amino-2-methyl-5-(phosphooxymethyl)pyrimidine + CO + 5'-deoxyadenosine + formate + L-methionine + 3 H(+). It participates in cofactor biosynthesis; thiamine diphosphate biosynthesis. Catalyzes the synthesis of the hydroxymethylpyrimidine phosphate (HMP-P) moiety of thiamine from aminoimidazole ribotide (AIR) in a radical S-adenosyl-L-methionine (SAM)-dependent reaction. This Halobacterium salinarum (strain ATCC 29341 / DSM 671 / R1) protein is Phosphomethylpyrimidine synthase.